The following is a 471-amino-acid chain: Citrate synthase, mitochondrial (471 aa).

Catalysis depends on residues H309, H355, and D409.

This sequence belongs to the citrate synthase family. Homodimer. In terms of tissue distribution, ubiquitous.

The protein localises to the mitochondrion matrix. It catalyses the reaction oxaloacetate + acetyl-CoA + H2O = citrate + CoA + H(+). It participates in carbohydrate metabolism; tricarboxylic acid cycle; isocitrate from oxaloacetate: step 1/2. This chain is Citrate synthase, mitochondrial, found in Solanum tuberosum (Potato).